The sequence spans 405 residues: S-adenosylmethionine synthase (405 aa).

His-22 is a binding site for ATP. A Mg(2+)-binding site is contributed by Asp-24. Glu-50 is a binding site for K(+). L-methionine-binding residues include Glu-63 and Gln-107. The segment at 107 to 117 (QSPDIAQGVDR) is flexible loop. Residues 184–186 (DGK), 250–251 (RF), Asp-259, 265–266 (RK), Ala-282, and Lys-286 each bind ATP. Asp-259 provides a ligand contact to L-methionine. Lys-290 provides a ligand contact to L-methionine.

This sequence belongs to the AdoMet synthase family. As to quaternary structure, homotetramer; dimer of dimers. Requires Mg(2+) as cofactor. The cofactor is K(+).

It localises to the cytoplasm. The enzyme catalyses L-methionine + ATP + H2O = S-adenosyl-L-methionine + phosphate + diphosphate. It participates in amino-acid biosynthesis; S-adenosyl-L-methionine biosynthesis; S-adenosyl-L-methionine from L-methionine: step 1/1. Catalyzes the formation of S-adenosylmethionine (AdoMet) from methionine and ATP. The overall synthetic reaction is composed of two sequential steps, AdoMet formation and the subsequent tripolyphosphate hydrolysis which occurs prior to release of AdoMet from the enzyme. The protein is S-adenosylmethionine synthase of Roseiflexus sp. (strain RS-1).